The sequence spans 270 residues: MMNRIHAVILDWAGTTVDFGSFAPTQIFVEAFRQAFDVEITLAEARVPMGLGKWQHIEALGKLPAVDARWQAKFSRSMSAADIDAIYAAFMPLQIAKVVDFSSPIAGVIDTIAALRAEGIKIGSCSGYPRAVMERLVPAAAGHGYCPDHWVATDDLAAGGRPGPWMALQNVIALGIDAVAHCVKVDDAAPGISEGLNAGMWTVGLAVSGNEFGATWDAYQTMSKEDVAVRREHAASKLYAAGAHYVVDSLADLPEVIAHINARLAQGERP.

The Nucleophile role is filled by Asp11. Mg(2+)-binding residues include Asp11 and Ala13. Residue Lys53 is the Schiff-base intermediate with substrate of the active site. Asp187 serves as a coordination point for Mg(2+).

This sequence belongs to the HAD-like hydrolase superfamily. PhnX family. As to quaternary structure, homodimer. Mg(2+) is required as a cofactor.

It carries out the reaction phosphonoacetaldehyde + H2O = acetaldehyde + phosphate + H(+). In terms of biological role, involved in phosphonate degradation. This is Phosphonoacetaldehyde hydrolase from Salmonella paratyphi C (strain RKS4594).